The primary structure comprises 432 residues: Adenylosuccinate synthetase (432 aa).

Residues Gly-13 to Lys-19 and Gly-41 to Thr-43 each bind GTP. The active-site Proton acceptor is the Asp-14. Residues Asp-14 and Gly-41 each contribute to the Mg(2+) site. IMP is bound by residues Asp-14–Lys-17, Asn-39–His-42, Thr-131, Arg-145, Gln-226, Thr-241, and Arg-305. The Proton donor role is filled by His-42. Residue Ser-301 to Arg-307 coordinates substrate. GTP contacts are provided by residues Arg-307, Lys-333 to Asp-335, and Ser-416 to Gly-418.

It belongs to the adenylosuccinate synthetase family. As to quaternary structure, homodimer. It depends on Mg(2+) as a cofactor.

The protein localises to the cytoplasm. The catalysed reaction is IMP + L-aspartate + GTP = N(6)-(1,2-dicarboxyethyl)-AMP + GDP + phosphate + 2 H(+). It functions in the pathway purine metabolism; AMP biosynthesis via de novo pathway; AMP from IMP: step 1/2. Its function is as follows. Plays an important role in the de novo pathway of purine nucleotide biosynthesis. Catalyzes the first committed step in the biosynthesis of AMP from IMP. In Neisseria meningitidis serogroup A / serotype 4A (strain DSM 15465 / Z2491), this protein is Adenylosuccinate synthetase.